A 146-amino-acid polypeptide reads, in one-letter code: Hut operon positive regulatory protein (146 aa).

This sequence belongs to the HutP family. Homohexamer.

In terms of biological role, antiterminator that binds to cis-acting regulatory sequences on the mRNA in the presence of histidine, thereby suppressing transcription termination and activating the hut operon for histidine utilization. In Bacillus cereus (strain G9842), this protein is Hut operon positive regulatory protein.